Consider the following 180-residue polypeptide: Bifunctional protein PyrR 1 (180 aa).

Residues 39–40 (TR), 103–111 (DDVLFTGRT), Arg136, and Val160 each bind substrate. The PRPP-binding signature appears at 99-111 (VILVDDVLFTGRT).

It belongs to the purine/pyrimidine phosphoribosyltransferase family. PyrR subfamily. In terms of assembly, homodimer and homohexamer; in equilibrium.

It carries out the reaction UMP + diphosphate = 5-phospho-alpha-D-ribose 1-diphosphate + uracil. Functionally, regulates transcriptional attenuation of the pyrimidine nucleotide (pyr) operon by binding in a uridine-dependent manner to specific sites on pyr mRNA. This disrupts an antiterminator hairpin in the RNA and favors formation of a downstream transcription terminator, leading to a reduced expression of downstream genes. Its function is as follows. Also displays a weak uracil phosphoribosyltransferase activity which is not physiologically significant. This Lactiplantibacillus plantarum (strain ATCC BAA-793 / NCIMB 8826 / WCFS1) (Lactobacillus plantarum) protein is Bifunctional protein PyrR 1 (pyrR1).